A 389-amino-acid chain; its full sequence is Inactive serine/threonine-protein kinase ZRK12 (389 aa).

A Protein kinase domain is found at 41-342 (SADEIRKATN…ETQFDSHQDI (302 aa)). ATP is bound by residues 47–55 (KATNNFGVS) and Lys84. Tyr129 carries the post-translational modification Phosphotyrosine. At Thr214 the chain carries Phosphothreonine. Tyr222 is modified (phosphotyrosine).

Belongs to the protein kinase superfamily. Ser/Thr protein kinase family.

Functionally, together with RPP13L4/ZAR1, involved in the regulation of the ambient temperature-sensitive intersection of growth and immune response in the absence of pathogens. This is Inactive serine/threonine-protein kinase ZRK12 from Arabidopsis thaliana (Mouse-ear cress).